A 305-amino-acid chain; its full sequence is Carbonic anhydrase 4 (305 aa).

An N-terminal signal peptide occupies residues 1–17 (MQLLLALLALAYVAPST). In terms of domain architecture, Alpha-carbonic anhydrase spans 20 to 278 (SGWCYEIQTK…LGKRQVFKSH (259 aa)). 2 disulfides stabilise this stretch: Cys-23-Cys-35 and Cys-45-Cys-222. His-87 (proton donor/acceptor) is an active-site residue. Residues His-114 and His-116 each contribute to the Zn(2+) site. Asn-123 carries an N-linked (GlcNAc...) asparagine glycan. Residue His-139 participates in Zn(2+) binding. N-linked (GlcNAc...) asparagine glycosylation occurs at Asn-214. 218–219 (TT) serves as a coordination point for substrate. Ser-277 is lipidated: GPI-anchor amidated serine. The propeptide at 278 to 305 (HAPGQLLSLPLPTLLVPTLTCLVANFLQ) is removed in mature form.

The protein belongs to the alpha-carbonic anhydrase family. Interacts with SLC4A4. Requires Zn(2+) as cofactor.

Its subcellular location is the cell membrane. The catalysed reaction is hydrogencarbonate + H(+) = CO2 + H2O. Its activity is regulated as follows. Inhibited by acetazolamide. Its function is as follows. Catalyzes the reversible hydration of carbon dioxide into bicarbonate and protons and thus is essential to maintaining intracellular and extracellular pH. May stimulate the sodium/bicarbonate transporter activity of SLC4A4 that acts in pH homeostasis. It is essential for acid overload removal from the retina and retina epithelium, and acid release in the choriocapillaris in the choroid. In Mus musculus (Mouse), this protein is Carbonic anhydrase 4 (Ca4).